Reading from the N-terminus, the 359-residue chain is MHPRPSPIAASLYTLRDLDADVIILHGPHGCCFRTGRLLETDGVRVLTTAMSEQDFIFGASDKLTETLRKAYEMFSPKLVGVVGTCASMIIGEDLKEAVQRAGIPARVLAVESHGGFGEGDNTEGAIIVLEAAAEQGIIPEEEAERQIKMLKLATEIEKTRGMAQGKYIRPSYGDDKDEVALRVLEAIMEGRRVAFVLNAKKETSYLFADTLTLPFGSLNPDNPPIIIANLDKGIGLPRIRRHAENILSEIERSGNRVEHITGGLDEYPITGARAAEILRNEEIEFAVVSGVPHALPVEELGLESVAVTDGPRLVEPLRGLGYTHVVAELDAHARTLGQRSIVESDFGDALRRNIKKVI.

The protein belongs to the NifD/NifK/NifE/NifN family. Homodimer or monomer. The Ni-sirohydrochlorin a,c-diamide reductive cyclase complex is composed of a NifH homolog component CfbC and a NifD homolog component CfbD. It depends on [4Fe-4S] cluster as a cofactor.

The catalysed reaction is Ni-sirohydrochlorin a,c-diamide + 3 AH2 + ATP + H2O = 15,17(3)-seco-F430-17(3)-acid + 3 A + ADP + phosphate. Involved in the biosynthesis of the unique nickel-containing tetrapyrrole coenzyme F430, the prosthetic group of methyl-coenzyme M reductase (MCR), which plays a key role in methanogenesis and anaerobic methane oxidation. Catalyzes both the six-electron reduction of the tetrahydroporphyrin ring system and the gamma-lactamization of the c-acetamide side chain of Ni-sirohydrochlorin a,c-diamide to yield 15,17(3)-seco-F430-17(3)-acid (seco-F430), the last intermediate in the biosynthesis of the coenzyme F430. This is Ni-sirohydrochlorin a,c-diamide reductive cyclase complex, component CfbD from Methanothermobacter thermautotrophicus (strain ATCC 29096 / DSM 1053 / JCM 10044 / NBRC 100330 / Delta H) (Methanobacterium thermoautotrophicum).